A 427-amino-acid polypeptide reads, in one-letter code: Gamma-glutamyl phosphate reductase (427 aa).

It belongs to the gamma-glutamyl phosphate reductase family.

The protein localises to the cytoplasm. The catalysed reaction is L-glutamate 5-semialdehyde + phosphate + NADP(+) = L-glutamyl 5-phosphate + NADPH + H(+). It functions in the pathway amino-acid biosynthesis; L-proline biosynthesis; L-glutamate 5-semialdehyde from L-glutamate: step 2/2. Catalyzes the NADPH-dependent reduction of L-glutamate 5-phosphate into L-glutamate 5-semialdehyde and phosphate. The product spontaneously undergoes cyclization to form 1-pyrroline-5-carboxylate. The protein is Gamma-glutamyl phosphate reductase of Allorhizobium ampelinum (strain ATCC BAA-846 / DSM 112012 / S4) (Agrobacterium vitis (strain S4)).